Here is a 575-residue protein sequence, read N- to C-terminus: Isocitrate dehydrogenase kinase/phosphatase (575 aa).

ATP-binding positions include 315–321 (APGVKGM) and Lys336. The active site involves Asp371.

It belongs to the AceK family.

The protein resides in the cytoplasm. The catalysed reaction is L-seryl-[isocitrate dehydrogenase] + ATP = O-phospho-L-seryl-[isocitrate dehydrogenase] + ADP + H(+). Bifunctional enzyme which can phosphorylate or dephosphorylate isocitrate dehydrogenase (IDH) on a specific serine residue. This is a regulatory mechanism which enables bacteria to bypass the Krebs cycle via the glyoxylate shunt in response to the source of carbon. When bacteria are grown on glucose, IDH is fully active and unphosphorylated, but when grown on acetate or ethanol, the activity of IDH declines drastically concomitant with its phosphorylation. The chain is Isocitrate dehydrogenase kinase/phosphatase from Yersinia pseudotuberculosis serotype O:1b (strain IP 31758).